The following is a 1368-amino-acid chain: DNA-directed RNA polymerase subunit beta' (1368 aa).

Positions M1–T38 are disordered. A compositionally biased stretch (basic residues) spans P7 to A18. Over residues S19 to S29 the composition is skewed to low complexity. C250, C318, C325, and C328 together coordinate Zn(2+). The tract at residues A1340–S1368 is disordered. Over residues G1353–S1368 the composition is skewed to low complexity.

It belongs to the RNA polymerase beta' chain family. RpoC2 subfamily. In terms of assembly, in cyanobacteria the RNAP catalytic core is composed of 2 alpha, 1 beta, 1 beta', 1 gamma and 1 omega subunit. When a sigma factor is associated with the core the holoenzyme is formed, which can initiate transcription. The cofactor is Zn(2+).

The catalysed reaction is RNA(n) + a ribonucleoside 5'-triphosphate = RNA(n+1) + diphosphate. In terms of biological role, DNA-dependent RNA polymerase catalyzes the transcription of DNA into RNA using the four ribonucleoside triphosphates as substrates. This chain is DNA-directed RNA polymerase subunit beta', found in Synechococcus sp. (strain RCC307).